The sequence spans 91 residues: Molybdopterin synthase sulfur carrier subunit (91 aa).

Position 91 is a 1-thioglycine; alternate (G91). Glycyl adenylate; alternate is present on G91.

Belongs to the MoaD family. MOCS2A subfamily. In terms of assembly, heterotetramer; composed of 2 small (MOCS2A) and 2 large (MOCS2B) subunits. In terms of processing, C-terminal thiocarboxylation occurs in 2 steps, it is first acyl-adenylated (-COAMP) via the hesA/moeB/thiF part of uba4, then thiocarboxylated (-COSH) via the rhodanese domain of uba4.

The protein localises to the cytoplasm. Its pathway is cofactor biosynthesis; molybdopterin biosynthesis. In terms of biological role, acts as a sulfur carrier required for molybdopterin biosynthesis. Component of the molybdopterin synthase complex that catalyzes the conversion of precursor Z into molybdopterin by mediating the incorporation of 2 sulfur atoms into precursor Z to generate a dithiolene group. In the complex, serves as sulfur donor by being thiocarboxylated (-COSH) at its C-terminus by uba4. After interaction with MOCS2B, the sulfur is then transferred to precursor Z to form molybdopterin. In Emericella nidulans (strain FGSC A4 / ATCC 38163 / CBS 112.46 / NRRL 194 / M139) (Aspergillus nidulans), this protein is Molybdopterin synthase sulfur carrier subunit.